The primary structure comprises 319 residues: Carbonic anhydrase, chloroplastic (319 aa).

The transit peptide at 1–98 (MSTINGCLTS…AASKVAQITS (98 aa)) directs the protein to the chloroplast.

The protein belongs to the beta-class carbonic anhydrase family. As to quaternary structure, homohexamer.

The protein resides in the plastid. It localises to the chloroplast stroma. The enzyme catalyses hydrogencarbonate + H(+) = CO2 + H2O. Reversible hydration of carbon dioxide. This Spinacia oleracea (Spinach) protein is Carbonic anhydrase, chloroplastic.